Reading from the N-terminus, the 911-residue chain is MSAEQKQGGTELAPRYDAKLVEDEYYQYWMDGGFYRAPIVEGKQPYTIVIPPPNVTGTLHLGHALNNTMIDILIRWKRMQGHPTLYLPGTDHAGLATQIRVEEDLRKSGGPTRHELGREAFVAKVWDWKERYHATITSQLRKLGVSVDWSREAFTMDERLSRAVRAFFVQLYKKGLIYQGTRITHWCPKDQTALSDIEVEYEERQGHMWHFRYPLADGSGSIVIATTRPETMLGDTAVAVNPEDERYKHLVGKMLRHPATGREIPIIADEYVDPAFGTGCVKITPFHDPNDFEIGLRHGLEMPQVIGPKGEMTEAAGKYAGLDRYECRRRIVADAEAEGWLVKVEEHQHAVGCCARCGTVIEPLISRQWYVKMKPLAEPAIRAVESGQIKIVPERFTKVYLHWMENIQDWCISRQIWWGHRIPVWYCDDCGHLTVSETDPTRCEKCGSANIRQDEDALDTWFSSALWPFSTLGWPDDTADLRYFFPTDVLVTGYDILFFWVARMIFSSLELTGKIPFHTVVLHGLVRDAQGRKMSKSLGNGVDPIDVIDQYGTDALRFMLVTGSSPGNDIRFHTERVENARNFANKLWNASRFVLMNLADWQPAAEGAALQYDVADRWIRHRFNEAARAVNELLGEYQYGEAARTIYDFIWSEFCDWYIELVKPRLYNPADPTRAAAQETLARVLEGTLRLLHPFMPYITEAIWQKLPLRSPQVETAPEIARAAGRDALPPSISVTAYPTPVEGWADAEANERMALIIDTIRALRSIRAEFRLGEHTRIDAVVMATSDQALAILNEGRAFIENLGKTGQLTIQPVAEAKPKNAAAAVVTGAEIYVPLGGLIDLPKEIERLTKELTTTGDELAKLEKKLSNEGFLTKAKPEVVEKTREEAAALAEKRQALENRLAMLRSMQG.

The short motif at 53-63 (PNVTGTLHLGH) is the 'HIGH' region element. The 'KMSKS' region motif lies at 533–537 (KMSKS). Lys-536 contributes to the ATP binding site. Positions 845-910 (KEIERLTKEL…NRLAMLRSMQ (66 aa)) form a coiled coil.

The protein belongs to the class-I aminoacyl-tRNA synthetase family. ValS type 1 subfamily. In terms of assembly, monomer.

The protein localises to the cytoplasm. The catalysed reaction is tRNA(Val) + L-valine + ATP = L-valyl-tRNA(Val) + AMP + diphosphate. Functionally, catalyzes the attachment of valine to tRNA(Val). As ValRS can inadvertently accommodate and process structurally similar amino acids such as threonine, to avoid such errors, it has a 'posttransfer' editing activity that hydrolyzes mischarged Thr-tRNA(Val) in a tRNA-dependent manner. This Symbiobacterium thermophilum (strain DSM 24528 / JCM 14929 / IAM 14863 / T) protein is Valine--tRNA ligase.